Here is a 904-residue protein sequence, read N- to C-terminus: Serine/arginine repetitive matrix protein 1 (904 aa).

Methionine 1 is subject to N-acetylmethionine. The segment at 1-151 (MDAGFFRGTS…ASMKKQDEDK (151 aa)) is necessary for DNA and RNA-binding. The tract at residues 1–156 (MDAGFFRGTS…QDEDKDKRDK (156 aa)) is necessary for mRNA 3'-end cleavage and cytoplasmic accumulation. The residue at position 7 (arginine 7) is a Citrulline. The PWI domain maps to 27–126 (QLKFAECLEK…AGIPSAFLEL (100 aa)). Lysine 127 is covalently cross-linked (Glycyl lysine isopeptide (Lys-Gly) (interchain with G-Cter in SUMO2)). Positions 139–170 (EKLASMKKQDEDKDKRDKEEKESSREKRERSR) are enriched in basic and acidic residues. Residues 139 to 904 (EKLASMKKQD…MRKAQVSPQS (766 aa)) are disordered. N6-acetyllysine is present on lysine 140. The segment covering 171 to 207 (SPRRRKSRSPSPRRRSSPVRRERKRSHSRSPRHRTKS) has biased composition (basic residues). The segment covering 214-234 (PEKKEKTPELPEPSVKVKEPS) has biased composition (basic and acidic residues). Threonine 220 bears the Phosphothreonine mark. Position 227 is a phosphoserine (serine 227). Lysine 231 participates in a covalent cross-link: Glycyl lysine isopeptide (Lys-Gly) (interchain with G-Cter in SUMO1); alternate. Lysine 231 is covalently cross-linked (Glycyl lysine isopeptide (Lys-Gly) (interchain with G-Cter in SUMO2); alternate). Phosphoserine occurs at positions 234 and 240. Threonine 241 is modified (phosphothreonine). A compositionally biased stretch (basic and acidic residues) spans 246 to 275 (KVPKPEPIPEPKEPSPEKNSKKEKEKEKTR). A Glycyl lysine isopeptide (Lys-Gly) (interchain with G-Cter in SUMO2) cross-link involves residue lysine 249. Serine 260 is subject to Phosphoserine. Basic residues-rich tracts occupy residues 276-329 (PRSR…RTPP) and 336-351 (PRHR…RRRS). The tract at residues 300–688 (RRHRSRSRSY…NKRHSPSPRP (389 aa)) is necessary for speckles and matrix localization. Residues 352–368 (SASLSGSSSSSSSSRSR) show a composition bias toward low complexity. Residues serine 389, serine 391, serine 393, and serine 402 each carry the phosphoserine modification. A Phosphothreonine modification is found at threonine 406. Serine 414 bears the Phosphoserine mark. Threonine 416 is subject to Phosphothreonine. 4 positions are modified to phosphoserine: serine 420, serine 429, serine 431, and serine 436. Over residues 428-438 (VSVSPGRTSGK) the composition is skewed to polar residues. Lysine 447 is covalently cross-linked (Glycyl lysine isopeptide (Lys-Gly) (interchain with G-Cter in SUMO2)). Phosphoserine occurs at positions 450 and 452. Lysine 459 participates in a covalent cross-link: Glycyl lysine isopeptide (Lys-Gly) (interchain with G-Cter in SUMO2). Serine 463 and serine 465 each carry phosphoserine. Residue lysine 472 forms a Glycyl lysine isopeptide (Lys-Gly) (interchain with G-Cter in SUMO2) linkage. A Phosphoserine modification is found at serine 478. A compositionally biased stretch (low complexity) spans 478-501 (SVQQRRQYRRQNQQSSSDSGSSSS). The span at 503–518 (EDERPKRSHVKNGEVG) shows a compositional bias: basic and acidic residues. 7 positions are modified to phosphoserine: serine 524, serine 526, serine 528, serine 530, serine 532, serine 549, and serine 551. A compositionally biased stretch (basic residues) spans 533 to 560 (PRKRQKETSPRGRRRRSPSPPPTRRRRS). The residue at position 555 (threonine 555) is a Phosphothreonine. Phosphoserine occurs at positions 560 and 562. The segment covering 567-592 (PRRRRTPTPPPRRRTPSPPPRRRSPS) has biased composition (basic residues). A phosphothreonine mark is found at threonine 572, threonine 574, and threonine 581. Serine 583 is subject to Phosphoserine. A compositionally biased stretch (low complexity) spans 593–605 (PRRYSPPIQRRYS). Residue tyrosine 596 is modified to Phosphotyrosine. Residues serine 597, serine 605, and serine 607 each carry the phosphoserine modification. Threonine 614 bears the Phosphothreonine mark. Residues serine 616, serine 626, serine 628, serine 636, and serine 638 each carry the phosphoserine modification. Residues 621–636 (PKRRASPSPPPKRRVS) show a composition bias toward basic residues. A compositionally biased stretch (basic residues) spans 649-663 (TKRRSPSLSSKHRKG). Residues serine 694, serine 695, serine 696, serine 705, serine 707, serine 713, and serine 715 each carry the phosphoserine modification. Low complexity-rich tracts occupy residues 701 to 719 (RRGA…PSTR) and 736 to 759 (AASP…SPEP). Threonine 718 bears the Phosphothreonine mark. Residues serine 738, serine 740, serine 748, serine 752, serine 754, serine 756, serine 769, serine 773, serine 775, and serine 777 each carry the phosphoserine modification. Residues 771-786 (VQSQSPSTNWSPAVPV) are compositionally biased toward low complexity. A Phosphothreonine modification is found at threonine 778. Phosphoserine is present on residues serine 781 and serine 791. Residue threonine 793 is modified to Phosphothreonine. 3 positions are modified to phosphoserine: serine 795, serine 797, and serine 802. A compositionally biased stretch (basic residues) spans 809 to 834 (KKKKKKKDKKHKKDKKHKKHKKHKKE). Low complexity predominate over residues 837–866 (VAAAAAAAVTPAAIAAATTTLAQEEPVAAP). Lysine 869 participates in a covalent cross-link: Glycyl lysine isopeptide (Lys-Gly) (interchain with G-Cter in SUMO2). At threonine 872 the chain carries Phosphothreonine. Serine 874 bears the Phosphoserine mark. A compositionally biased stretch (basic and acidic residues) spans 882-892 (DLEKHLREKAL). The residue at position 901 (serine 901) is a Phosphoserine.

It belongs to the splicing factor SR family. As to quaternary structure, identified in the spliceosome C complex. Found in a pre-mRNA splicing complex with SFRS4, SFRS5, SNRP70, SNRPA1, SRRM1 and SRRM2. Found in a pre-mRNA exonic splicing enhancer (ESE) complex with SNRP70, SNRPA1, SRRM1 and TRA2B/SFRS10. Component of the minor spliceosome, which splices U12-type introns. Found in a mRNA splicing-dependent exon junction complex (EJC) with DEK, PRPF8, NCBP1, RBM8A, RNPS1, SRRM1 and ALYREF/THOC4. Interacts with DDX39B, CPSF1, RBM8A, RNPS1, and ALYREF/THOC4. Seems to be a compound of RNA export complexes that are released from speckles in a ATP-dependent manner. Post-translationally, phosphorylated on multiple serine and threonine residues by DYRK3 during the G2-to-M transition, after the nuclear-envelope breakdown. Phosphorylation by DYRK3 promotes disassembly of nuclear speckles. Citrullinated by PADI4.

It localises to the nucleus matrix. It is found in the nucleus speckle. Functionally, part of pre- and post-splicing multiprotein mRNP complexes. As a component of the minor spliceosome, involved in the splicing of U12-type introns in pre-mRNAs. Involved in numerous pre-mRNA processing events. Promotes constitutive and exonic splicing enhancer (ESE)-dependent splicing activation by bridging together sequence-specific (SR family proteins, SFRS4, SFRS5 and TRA2B/SFRS10) and basal snRNP (SNRP70 and SNRPA1) factors of the spliceosome. Stimulates mRNA 3'-end cleavage independently of the formation of an exon junction complex. Binds both pre-mRNA and spliced mRNA 20-25 nt upstream of exon-exon junctions. Binds RNA and DNA with low sequence specificity and has similar preference for either double- or single-stranded nucleic acid substrates. The chain is Serine/arginine repetitive matrix protein 1 (SRRM1) from Homo sapiens (Human).